A 719-amino-acid chain; its full sequence is Histone-lysine N-methyltransferase SETDB2 (719 aa).

Residues 72 to 82 (SQKEVNAQSSD) show a composition bias toward polar residues. A disordered region spans residues 72 to 102 (SQKEVNAQSSDPMPVTQKEQENKSNAFPSTS). Residues 157 to 229 (LNLKGENPLQ…DNFSFNTYVQ (73 aa)) form the MBD domain. Positions 291–364 (DSCDCSEGCI…LCQNRVVQHG (74 aa)) constitute a Pre-SET domain. 9 residues coordinate Zn(2+): Cys-293, Cys-295, Cys-299, Cys-305, Cys-307, Cys-345, Cys-349, Cys-351, and Cys-356. In terms of domain architecture, SET spans 367–694 (VRLQVFKTEQ…ARTELTWDYG (328 aa)). S-adenosyl-L-methionine-binding positions include 377-379 (KGW) and Asp-418. The disordered stretch occupies residues 508 to 547 (FVSSESVTPEDNDGFKPPREHLNSKTKGAQKDSSSNHVDE). The span at 520–530 (DGFKPPREHLN) shows a compositional bias: basic and acidic residues. Residues 532–543 (KTKGAQKDSSSN) are compositionally biased toward polar residues. S-adenosyl-L-methionine is bound by residues Arg-648 and 651 to 652 (NH). 4 residues coordinate Zn(2+): Cys-654, Cys-707, Cys-709, and Cys-714.

Belongs to the class V-like SAM-binding methyltransferase superfamily. Ubiquitous. Highest expression in heart, testis and ovary.

Its subcellular location is the nucleus. It is found in the chromosome. The enzyme catalyses N(6),N(6)-dimethyl-L-lysyl(9)-[histone H3] + S-adenosyl-L-methionine = N(6),N(6),N(6)-trimethyl-L-lysyl(9)-[histone H3] + S-adenosyl-L-homocysteine + H(+). In terms of biological role, histone methyltransferase involved in left-right axis specification in early development and mitosis. Specifically trimethylates 'Lys-9' of histone H3 (H3K9me3). H3K9me3 is a specific tag for epigenetic transcriptional repression that recruits HP1 (CBX1, CBX3 and/or CBX5) proteins to methylated histones. Contributes to H3K9me3 in both the interspersed repetitive elements and centromere-associated repeats. Plays a role in chromosome condensation and segregation during mitosis. The sequence is that of Histone-lysine N-methyltransferase SETDB2 (SETDB2) from Homo sapiens (Human).